The following is a 342-amino-acid chain: MAVRAAVAGASGYAGGELLRLLLTHPEVEIGALTGNSNAGQRLGALQPHLLPLADRVLEATTPEVLGGHDVVFLALPHGQSAAVAEQLGPDVLVVDMGADFRLKDAGDWERFYGSPHAGTWPYGLPELPGARAALEGSKRIAVPGCYPTAVSLALFPAYAASLAEPEAVIVAASGTSGAGKAAKPHLLGSEVMGSMSPYGVGGGHRHTPEMIQNLGAVAGEPVTVSFTPTLAPMPRGILATCTAKAKPGVTAESVRAAYEKALADEPFVHLLPEGQWPATASVYGSNAVQVQVAHDAAAGRIIAISAIDNLAKGTAGGAVQSMNLALGLDETTGLTTIGVAP.

The active site involves C146.

This sequence belongs to the NAGSA dehydrogenase family. Type 1 subfamily.

It is found in the cytoplasm. It carries out the reaction N-acetyl-L-glutamate 5-semialdehyde + phosphate + NADP(+) = N-acetyl-L-glutamyl 5-phosphate + NADPH + H(+). It participates in amino-acid biosynthesis; L-arginine biosynthesis; N(2)-acetyl-L-ornithine from L-glutamate: step 3/4. Its function is as follows. Catalyzes the NADPH-dependent reduction of N-acetyl-5-glutamyl phosphate to yield N-acetyl-L-glutamate 5-semialdehyde. The polypeptide is N-acetyl-gamma-glutamyl-phosphate reductase (Streptomyces coelicolor (strain ATCC BAA-471 / A3(2) / M145)).